The following is a 338-amino-acid chain: MKILVAMSGGVDSTVTAYKLKQAGHEIIGCYMKLHGKPNYHEENIQKVEKVANFLGIKYHILDLQEDFKNQVYMPFINTYKDGKTPNPCALCNRFIKLGKLLEFAKSLGCEKLATGHYARIENGLIKTAFDDSKDQSYFLANADKEALEYLIFPLGEMKKEDVKKFASTIEVLKSFATQKESSEICFVEDTYVQVLDQFMDTKIPGIVRDSSGKEVGKHEGYMHYTIGKRRGFEVRGAHEPHFVLKIDPKKNEIIVGKKEELKINEFDLEKINLFIDAKELDCEVKIRYRSRSTPCKVMINDDKSAKVILKEPVYGLASGQMAVFYDKDLVLASGFIN.

ATP is bound by residues 6–13 and methionine 32; that span reads AMSGGVDS. Cysteine 92 acts as the Nucleophile in catalysis. A disulfide bridge connects residues cysteine 92 and cysteine 186. Glycine 116 lines the ATP pocket. The tract at residues 134-136 is interaction with tRNA; the sequence is KDQ. The active-site Cysteine persulfide intermediate is the cysteine 186. The interaction with tRNA stretch occupies residues 288–289; the sequence is RY.

Belongs to the MnmA/TRMU family.

Its subcellular location is the cytoplasm. It carries out the reaction S-sulfanyl-L-cysteinyl-[protein] + uridine(34) in tRNA + AH2 + ATP = 2-thiouridine(34) in tRNA + L-cysteinyl-[protein] + A + AMP + diphosphate + H(+). In terms of biological role, catalyzes the 2-thiolation of uridine at the wobble position (U34) of tRNA, leading to the formation of s(2)U34. This chain is tRNA-specific 2-thiouridylase MnmA, found in Campylobacter lari (strain RM2100 / D67 / ATCC BAA-1060).